Here is a 269-residue protein sequence, read N- to C-terminus: MEGCPRNREIGPKLLDLIPQGRKWYQEDKNNTDQEKKLELRLGPPGGDEEDHSAIKKKNTEIRNIKKETEDKSFHCFNGNHFSPSNKTTSVPHISQKRTAPGPVVGWPPVRSFRKNLASTSSSKLGNESSHGGQINKSDDGEKQVETKKEGMFVKINMDGVPIGRKVDLNAYNSYEQLSFVVDKLFRGLLAAQRDISDGQGEEKPIIGLLDGKGEFTLTYEDNEGDKMLVGDVPWQMFVSSVKRLRVIKSSEISSALTFGCSKQEKMMH.

Residues 25–40 (YQEDKNNTDQEKKLEL) are compositionally biased toward basic and acidic residues. 2 disordered regions span residues 25 to 55 (YQED…HSAI) and 76 to 146 (CFNG…KQVE). Positions 38–42 (LELRL) match the EAR-like (transcriptional repression) motif. Composition is skewed to polar residues over residues 80–93 (NHFS…SVPH) and 117–136 (LAST…GQIN). The segment covering 137 to 146 (KSDDGEKQVE) has biased composition (basic and acidic residues). The PB1 domain occupies 151 to 250 (GMFVKINMDG…SVKRLRVIKS (100 aa)).

Belongs to the Aux/IAA family. As to quaternary structure, homodimers and heterodimers. Interacts with phytochrome A. Interacts with TPL.

The protein resides in the nucleus. In terms of biological role, aux/IAA proteins are short-lived transcriptional factors that function as repressors of early auxin response genes at low auxin concentrations. Repression is thought to result from the interaction with auxin response factors (ARFs), proteins that bind to the auxin-responsive promoter element (AuxRE). Formation of heterodimers with ARF proteins may alter their ability to modulate early auxin response genes expression. In Arabidopsis thaliana (Mouse-ear cress), this protein is Auxin-responsive protein IAA26 (IAA26).